The primary structure comprises 130 residues: Small ribosomal subunit protein uS8 (130 aa).

This sequence belongs to the universal ribosomal protein uS8 family. Component of the small ribosomal subunit (SSU). Mature N.crassa ribosomes consist of a small (40S) and a large (60S) subunit. The 40S small subunit contains 1 molecule of ribosomal RNA (18S rRNA) and at least 32 different proteins. The large 60S subunit contains 3 rRNA molecules (26S, 5.8S and 5S rRNA) and at least 42 different proteins.

It localises to the cytoplasm. Functionally, component of the ribosome, a large ribonucleoprotein complex responsible for the synthesis of proteins in the cell. The small ribosomal subunit (SSU) binds messenger RNAs (mRNAs) and translates the encoded message by selecting cognate aminoacyl-transfer RNA (tRNA) molecules. The large subunit (LSU) contains the ribosomal catalytic site termed the peptidyl transferase center (PTC), which catalyzes the formation of peptide bonds, thereby polymerizing the amino acids delivered by tRNAs into a polypeptide chain. The nascent polypeptides leave the ribosome through a tunnel in the LSU and interact with protein factors that function in enzymatic processing, targeting, and the membrane insertion of nascent chains at the exit of the ribosomal tunnel. In Neurospora crassa (strain ATCC 24698 / 74-OR23-1A / CBS 708.71 / DSM 1257 / FGSC 987), this protein is Small ribosomal subunit protein uS8 (crp-27).